The following is a 117-amino-acid chain: MKRASIVREKKYYELVEQLKDRTQDVTFSATKALSLLMLFSRYLVNYTNVESVNDINEECAKHYFNYLMKNHKRLGINLTDIKRSMHLISGLLDVDVNHYLKDFSLSNVTLWMTQER.

It localises to the cytoplasm. Required for swarm cell differentiation. Plays a crucial role in regulating the degree of cell flagellation. The polypeptide is Swarming motility protein SwrAA (swrAA) (Bacillus subtilis (strain 168)).